Consider the following 461-residue polypeptide: Glutamyl-tRNA reductase (461 aa).

Substrate contacts are provided by residues 50–53 (TCNR), Ser111, 116–118 (EPQ), and Gln122. The active-site Nucleophile is Cys51. Residue 191–196 (GAGEMA) participates in NADP(+) binding.

This sequence belongs to the glutamyl-tRNA reductase family. In terms of assembly, homodimer.

The enzyme catalyses (S)-4-amino-5-oxopentanoate + tRNA(Glu) + NADP(+) = L-glutamyl-tRNA(Glu) + NADPH + H(+). Its pathway is porphyrin-containing compound metabolism; protoporphyrin-IX biosynthesis; 5-aminolevulinate from L-glutamyl-tRNA(Glu): step 1/2. In terms of biological role, catalyzes the NADPH-dependent reduction of glutamyl-tRNA(Glu) to glutamate 1-semialdehyde (GSA). In Syntrophobacter fumaroxidans (strain DSM 10017 / MPOB), this protein is Glutamyl-tRNA reductase.